We begin with the raw amino-acid sequence, 198 residues long: Probable GTP-binding protein EngB (198 aa).

The EngB-type G domain maps to 36–198; the sequence is SEPQFAFIGR…NLSKLQELLE (163 aa). Residues 44–51, 70–74, 88–91, 155–158, and 182–184 contribute to the GTP site; these read GRSNVGKS, GRTQL, DLPG, NKID, and ISA. Mg(2+) is bound by residues Ser51 and Thr72.

Belongs to the TRAFAC class TrmE-Era-EngA-EngB-Septin-like GTPase superfamily. EngB GTPase family. Mg(2+) is required as a cofactor.

In terms of biological role, necessary for normal cell division and for the maintenance of normal septation. This Mesomycoplasma hyopneumoniae (strain 232) (Mycoplasma hyopneumoniae) protein is Probable GTP-binding protein EngB.